Consider the following 225-residue polypeptide: Protein GrpE (225 aa).

Disordered regions lie at residues 1-44 (MTEE…ENAG) and 183-225 (VAVA…PDEG).

Belongs to the GrpE family. Homodimer.

It is found in the cytoplasm. In terms of biological role, participates actively in the response to hyperosmotic and heat shock by preventing the aggregation of stress-denatured proteins, in association with DnaK and GrpE. It is the nucleotide exchange factor for DnaK and may function as a thermosensor. Unfolded proteins bind initially to DnaJ; upon interaction with the DnaJ-bound protein, DnaK hydrolyzes its bound ATP, resulting in the formation of a stable complex. GrpE releases ADP from DnaK; ATP binding to DnaK triggers the release of the substrate protein, thus completing the reaction cycle. Several rounds of ATP-dependent interactions between DnaJ, DnaK and GrpE are required for fully efficient folding. This is Protein GrpE from Streptomyces coelicolor (strain ATCC BAA-471 / A3(2) / M145).